The sequence spans 304 residues: Nod factor export ATP-binding protein I (304 aa).

Positions 6-236 (IDLAGVKKSF…HIGCQVIEIF (231 aa)) constitute an ABC transporter domain. 38–45 (GPNGAGKS) lines the ATP pocket.

This sequence belongs to the ABC transporter superfamily. Lipooligosaccharide exporter (TC 3.A.1.102) family. The complex is composed of two ATP-binding proteins (NodI) and two transmembrane proteins (NodJ).

It is found in the cell inner membrane. Its function is as follows. Part of the ABC transporter complex NodIJ involved in the export of the nodulation factors (Nod factors), the bacterial signal molecules that induce symbiosis and subsequent nodulation induction. Nod factors are LCO (lipo-chitin oligosaccharide), a modified beta-1,4-linked N-acetylglucosamine oligosaccharide. This subunit is responsible for energy coupling to the transport system. This chain is Nod factor export ATP-binding protein I, found in Rhizobium sp. (strain N33).